The following is a 473-amino-acid chain: GTPase Der (473 aa).

EngA-type G domains are found at residues 5–170 (PVVA…PNQE) and 178–351 (LKLA…QSSM). Residues 11 to 18 (GRPNVGKS), 58 to 62 (DTGGI), 123 to 126 (NKVD), 184 to 191 (GRPNVGKS), 231 to 235 (DTAGV), and 296 to 299 (NKWD) each bind GTP. The region spanning 352–436 (FEVSTNRLTQ…PLNVVFKLNE (85 aa)) is the KH-like domain. Residues 438–454 (PYANKSDTPTKAKTQQL) show a composition bias toward polar residues. The disordered stretch occupies residues 438–473 (PYANKSDTPTKAKTQQLRQRERNRAQKFTTKDKKPR). The span at 455–473 (RQRERNRAQKFTTKDKKPR) shows a compositional bias: basic and acidic residues.

This sequence belongs to the TRAFAC class TrmE-Era-EngA-EngB-Septin-like GTPase superfamily. EngA (Der) GTPase family. As to quaternary structure, associates with the 50S ribosomal subunit.

In terms of biological role, GTPase that plays an essential role in the late steps of ribosome biogenesis. This is GTPase Der from Psychrobacter arcticus (strain DSM 17307 / VKM B-2377 / 273-4).